The following is a 334-amino-acid chain: Ornithine carbamoyltransferase (334 aa).

Carbamoyl phosphate is bound by residues 56-59 (STRT), glutamine 83, arginine 107, and 134-137 (HPTQ). Residues asparagine 168, aspartate 232, and 236-237 (SM) each bind L-ornithine. Carbamoyl phosphate-binding positions include 274-275 (CL) and arginine 320.

Belongs to the aspartate/ornithine carbamoyltransferase superfamily. OTCase family.

Its subcellular location is the cytoplasm. The catalysed reaction is carbamoyl phosphate + L-ornithine = L-citrulline + phosphate + H(+). It participates in amino-acid biosynthesis; L-arginine biosynthesis; L-arginine from L-ornithine and carbamoyl phosphate: step 1/3. Its function is as follows. Reversibly catalyzes the transfer of the carbamoyl group from carbamoyl phosphate (CP) to the N(epsilon) atom of ornithine (ORN) to produce L-citrulline. The polypeptide is Ornithine carbamoyltransferase (Escherichia coli O157:H7).